Consider the following 257-residue polypeptide: 3-methyl-2-oxobutanoate hydroxymethyltransferase (257 aa).

The Mg(2+) site is built by Asp42 and Asp86. 3-methyl-2-oxobutanoate contacts are provided by residues 42–43 (DS), Asp86, and Lys116. Glu118 contributes to the Mg(2+) binding site. The active-site Proton acceptor is the Glu185.

It belongs to the PanB family. In terms of assembly, homodecamer; pentamer of dimers. Mg(2+) is required as a cofactor.

Its subcellular location is the cytoplasm. The enzyme catalyses 3-methyl-2-oxobutanoate + (6R)-5,10-methylene-5,6,7,8-tetrahydrofolate + H2O = 2-dehydropantoate + (6S)-5,6,7,8-tetrahydrofolate. It functions in the pathway cofactor biosynthesis; (R)-pantothenate biosynthesis; (R)-pantoate from 3-methyl-2-oxobutanoate: step 1/2. Functionally, catalyzes the reversible reaction in which hydroxymethyl group from 5,10-methylenetetrahydrofolate is transferred onto alpha-ketoisovalerate to form ketopantoate. The sequence is that of 3-methyl-2-oxobutanoate hydroxymethyltransferase from Prochlorococcus marinus (strain MIT 9301).